The chain runs to 195 residues: MTNQKPSRRESILQALVELLQSDPGARITTAGLAKTVGVTEAALYRHFPSKRKMFEALIEFAEEAVFSRCQVILQEQEDVRVRLQQLSHLVLVFAERNPGLCCVLTGDALMGEDESLRKRASQFFERLETQIRQALKEGEIRQGLRPRTTAARGADFVMVFVEGRIQRFVRSSFLRLPTSDFDEAWGLVSEAVWG.

Positions 6–66 (PSRRESILQA…ALIEFAEEAV (61 aa)) constitute an HTH tetR-type domain. Residues 29–48 (TTAGLAKTVGVTEAALYRHF) constitute a DNA-binding region (H-T-H motif). Positions 118–138 (RKRASQFFERLETQIRQALKE) form a coiled coil.

Belongs to the nucleoid occlusion factor SlmA family. Homodimer. Interacts with FtsZ.

The protein localises to the cytoplasm. Its subcellular location is the nucleoid. In terms of biological role, required for nucleoid occlusion (NO) phenomenon, which prevents Z-ring formation and cell division over the nucleoid. Acts as a DNA-associated cell division inhibitor that binds simultaneously chromosomal DNA and FtsZ, and disrupts the assembly of FtsZ polymers. SlmA-DNA-binding sequences (SBS) are dispersed on non-Ter regions of the chromosome, preventing FtsZ polymerization at these regions. The protein is Nucleoid occlusion factor SlmA of Marinobacter nauticus (strain ATCC 700491 / DSM 11845 / VT8) (Marinobacter aquaeolei).